The chain runs to 161 residues: Phosphopantetheine adenylyltransferase (161 aa).

S11 contacts substrate. ATP contacts are provided by residues 11–12 (SF) and H19. Residues K43, L75, and R89 each contribute to the substrate site. Residues 90–92 (GLR), E100, and 125–131 (YSFISSS) contribute to the ATP site.

Belongs to the bacterial CoaD family. As to quaternary structure, homohexamer. The cofactor is Mg(2+).

The protein localises to the cytoplasm. It carries out the reaction (R)-4'-phosphopantetheine + ATP + H(+) = 3'-dephospho-CoA + diphosphate. Its pathway is cofactor biosynthesis; coenzyme A biosynthesis; CoA from (R)-pantothenate: step 4/5. In terms of biological role, reversibly transfers an adenylyl group from ATP to 4'-phosphopantetheine, yielding dephospho-CoA (dPCoA) and pyrophosphate. This chain is Phosphopantetheine adenylyltransferase, found in Staphylococcus haemolyticus (strain JCSC1435).